We begin with the raw amino-acid sequence, 377 residues long: Acetyltransferase ple2 (377 aa).

Positions 1 to 27 (MKPFSPELLVLSFILLVLSCAIRPAKG) are cleaved as a signal peptide. Helical transmembrane passes span 29 to 49 (WILWVIIVALNTYLTMTTTGD), 56 to 76 (IANNLFVITLTATDYILLTDV), 176 to 196 (IAAWLLFTTNQVSILLTALSL), and 258 to 278 (PALYVQLYAAFFLSGVLHAIG).

Belongs to the wax synthase family.

The protein localises to the membrane. The protein operates within secondary metabolite biosynthesis; terpenoid biosynthesis. Functionally, acetyltransferase; part of the gene cluster that mediates the biosynthesis of pleuromutilin, a tricyclic diterpene showing antibacterial properties. The geranylgeranyl diphosphate (GGPP) synthase ple4 catalyzes the first step in pleuromutilin biosynthesis. GGPP is then substrate of the premutilin synthase (PS) ple3 to yield premutilin. Premutilin synthase is a bifunctional enzyme composed of the fusion of a class II diterpene cyclase (DTC) and a class I diterpene synthase (DTS), with the corresponding domains and active sites containing characteristic aspartate-rich motifs. GGPP is first converted to mutildienyl-diphosphate (MPP) at the class II DTC site. MPP is subsequently further cyclized at the class I DTS site, followed by a 1,5-hydride shift and addition of water prior to terminating deprotonation, to yield premutilin. The cytochrome P450 monooxygenases ple5 and ple6 hydroxylate premutilin at C-11 and C-3, respectively, producing 11-hydroxypremutilin and 3-hydroxypremutilin. The combination of the actions of both ple5 and ple6 leads to the production of 3,11-dihydroxypremutilin. The short chain dehydrogenase ple7 further converts 3,11-dihydroxypremutilin into mutilin. The acetyltransferase ple2 then acetylates mutilin to produce 14-O-acetylmutilin. Finally, the cytochrome P450 monooxygenase ple1 catalyzes hydroxylation on the alpha position of the acetyl side chain of 14-O-acetylmutilin to yield pleuromutilin. The protein is Acetyltransferase ple2 of Rhodocybe pseudopiperita (Clitopilus pseudopiperitus).